The sequence spans 659 residues: DNA ligase (659 aa).

NAD(+) contacts are provided by residues 31 to 35 (DFVYD), 80 to 81 (SL), and Glu-109. Lys-111 acts as the N6-AMP-lysine intermediate in catalysis. Arg-132, Glu-166, Lys-281, and Lys-305 together coordinate NAD(+). Zn(2+) is bound by residues Cys-398, Cys-401, Cys-416, and Cys-421. Residues 581–659 (VTTHPFNGKT…EATFKVKINE (79 aa)) enclose the BRCT domain.

It belongs to the NAD-dependent DNA ligase family. LigA subfamily. The cofactor is Mg(2+). Mn(2+) serves as cofactor.

The catalysed reaction is NAD(+) + (deoxyribonucleotide)n-3'-hydroxyl + 5'-phospho-(deoxyribonucleotide)m = (deoxyribonucleotide)n+m + AMP + beta-nicotinamide D-nucleotide.. Its function is as follows. DNA ligase that catalyzes the formation of phosphodiester linkages between 5'-phosphoryl and 3'-hydroxyl groups in double-stranded DNA using NAD as a coenzyme and as the energy source for the reaction. It is essential for DNA replication and repair of damaged DNA. The chain is DNA ligase from Acholeplasma laidlawii (strain PG-8A).